A 148-amino-acid polypeptide reads, in one-letter code: MKVIFLKDVKGKGKKGEVKNVPDGYANNFLLKQGLAAEATNSSMKTLEAQKRKEEKDAAAEVENAKELKETLEKLTVEVKAKSGEGGRLFGSITSKQIVDAMQKSHKIKLDKRKFEMDDAIRALGYTNVTVKLHPQVTATVKVHVSEQ.

It belongs to the bacterial ribosomal protein bL9 family.

Binds to the 23S rRNA. The polypeptide is Large ribosomal subunit protein bL9 (Bacillus cereus (strain G9842)).